A 415-amino-acid polypeptide reads, in one-letter code: Ammonium transporter Rh type A (415 aa).

Topologically, residues 1-2 are cytoplasmic; the sequence is MR. A helical transmembrane segment spans residues 3–23; that stretch reads FIFPTIAVLLEASMIVLFGFF. The Extracellular segment spans residues 24 to 51; the sequence is VKYETEQNAIQQPNSTNSTKVDRSLELY. N-linked (GlcNAc...) asparagine glycans are attached at residues Asn-37 and Asn-40. Residues 52 to 72 traverse the membrane as a helical segment; the sequence is PLFQDVHVMIFVGFGFLMTFL. At 73-76 the chain is on the cytoplasmic side; the sequence is KKYG. Residues 77–97 form a helical membrane-spanning segment; the sequence is FSSVGINLLIAALGLQWGTFV. Topologically, residues 98–115 are extracellular; the sequence is QGMVHRHGQTIYIGIKNM. A helical transmembrane segment spans residues 116-136; the sequence is INADFSTATVLISFGAVLGKI. Topologically, residues 137–142 are cytoplasmic; that stretch reads SPTQML. A helical transmembrane segment spans residues 143-163; that stretch reads IMTIIEITVFAGNEYVVGEIF. Over 164–167 the chain is Extracellular; that stretch reads QASD. The chain crosses the membrane as a helical span at residues 168-188; sequence IGASMTIHAFGAYFGLAVAGV. Over 189–208 the chain is Cytoplasmic; sequence LYRTGLRKGHEKEESEYHSD. A helical membrane pass occupies residues 209–229; that stretch reads LFAMIGTLFLWMFWPSFNSAI. The Extracellular portion of the chain corresponds to 230–236; it reads AETAEEQ. Residues 237–257 form a helical membrane-spanning segment; that stretch reads YLAIINTYLSLVACVLTAYAM. The Cytoplasmic segment spans residues 258–268; that stretch reads SSLVGHRGKLD. Residues 269–287 form a helical membrane-spanning segment; sequence MVHIQNATLAGGVAVGTCA. The Extracellular segment spans residues 288-290; the sequence is DMK. A helical transmembrane segment spans residues 291 to 311; sequence IHPYGSLIIGSIAGMVSVLGF. Residues 312–332 are Cytoplasmic-facing; it reads RFLTPCLTAKLRIHDTCGVHN. A helical membrane pass occupies residues 333 to 353; sequence LHGLPGVVGGLSSIVAILLGV. The Extracellular portion of the chain corresponds to 354-363; sequence STASSMTMQA. The helical transmembrane segment at 364 to 384 threads the bilayer; the sequence is AALGSSIGSAIAGGLITGLIL. At 385–415 the chain is on the cytoplasmic side; sequence RFIVRGQPSKDNFFDDSVYWEVPKEKELDNV.

This sequence belongs to the ammonium transporter (TC 2.A.49) family. Rh subfamily. In terms of assembly, homodimer. Heterotrimer; a RHCE monomer interacts with a RHAG homodimer. Component of the ankyrin-1 complex in the erythrocyte, composed of ANK1, RHCE, RHAG, SLC4A1, EPB42, GYPA, GYPB and AQP1. Interacts with GYPB (via the N-terminal); this interaction bridges the (RHAG)2(RHCE) heterotrimer with the SLC4A1 Band 3 I dimer complexed with GYPA. In terms of processing, glycosylated.

The protein resides in the membrane. It carries out the reaction methylamine(out) = methylamine(in). The catalysed reaction is NH4(+)(in) = NH4(+)(out). It catalyses the reaction CO2(out) = CO2(in). Its function is as follows. Component of the ankyrin-1 complex, a multiprotein complex involved in the stability and shape of the erythrocyte membrane. Heterotrimer with RHCE (RHAG)2(RHCE), that transports ammonium and its related derivative methylammonium, in both neutral and ionic forms, across the erythrocyte membrane. The transport of NH4(+) is electrogenic and masks the NH3 transport. Also, may act as a CO2 channel. Moreover in erythrocyte, regulates RHD membrane expression and is associated with rhesus blood group antigen expression. The chain is Ammonium transporter Rh type A from Canis lupus familiaris (Dog).